A 340-amino-acid chain; its full sequence is Probable D,D-dipeptide transport system permease protein DdpB (340 aa).

Topologically, residues 1 to 11 (MTFWSILRQRC) are periplasmic. Residues 12–32 (WGLVLVVAGVCVITFIISHLI) form a helical membrane-spanning segment. The Cytoplasmic segment spans residues 33–104 (PGDPARLLAG…IFFPATLELA (72 aa)). The 231-residue stretch at 97 to 327 (FPATLELAFG…LVNLVVDLLY (231 aa)) folds into the ABC transmembrane type-1 domain. The helical transmembrane segment at 105 to 125 (FGALLLALLIGIPLGILSAVW) threads the bilayer. The Periplasmic portion of the chain corresponds to 126 to 135 (RNRWLDHLVR). A helical transmembrane segment spans residues 136 to 156 (IMAITGISTPAFWLGLGVIVL). At 157 to 199 (FYGHLQILPGGGRLDDWLDPPTHVTGFYLLDALLEGNGEVFFN) the chain is on the cytoplasmic side. A helical membrane pass occupies residues 200-220 (ALQHLILPALTLAFVHLGIVA). Topologically, residues 221–246 (RQIRSAMLEQLSEDYIRTARASGLPG) are periplasmic. The chain crosses the membrane as a helical span at residues 247–269 (WYIVLCYALPNALIPSITVLGLA). The Cytoplasmic portion of the chain corresponds to 270–279 (LGDLLYGAVL). A helical transmembrane segment spans residues 280–300 (TETVFAWPGMGAWVVTSIQAL). A topological domain (periplasmic) is located at residue Asp-301. A helical transmembrane segment spans residues 302 to 322 (FPAVMGFAVVVSFAYVLVNLV). The Cytoplasmic segment spans residues 323–340 (VDLLYLWIDPRIGRGGGE).

The protein belongs to the binding-protein-dependent transport system permease family. OppBC subfamily. As to quaternary structure, the complex is composed of two ATP-binding proteins (DdpD and DdpF), two transmembrane proteins (DdpB and DdpC) and a solute-binding protein (DdpA).

It is found in the cell inner membrane. Its function is as follows. Part of the ABC transporter complex DdpABCDF, which is probably involved in D,D-dipeptide transport. Probably responsible for the translocation of the substrate across the membrane. This Escherichia coli (strain K12) protein is Probable D,D-dipeptide transport system permease protein DdpB (ddpB).